The chain runs to 317 residues: ATP synthase gamma chain (317 aa).

It belongs to the ATPase gamma chain family. As to quaternary structure, F-type ATPases have 2 components, CF(1) - the catalytic core - and CF(0) - the membrane proton channel. CF(1) has five subunits: alpha(3), beta(3), gamma(1), delta(1), epsilon(1). CF(0) has three main subunits: a, b and c.

It localises to the cellular thylakoid membrane. Produces ATP from ADP in the presence of a proton gradient across the membrane. The gamma chain is believed to be important in regulating ATPase activity and the flow of protons through the CF(0) complex. The polypeptide is ATP synthase gamma chain (Synechococcus sp. (strain CC9311)).